A 182-amino-acid polypeptide reads, in one-letter code: MDSIVSSSTILMRSYLTPPVRSCSPATSVSVKPLSSVQVTSVAANRHLLSLSSGARRTRKSSSSVIRCGGIKEIGESEFSSTVLESAQPVLVEFVATWCGPCKLIYPAMEALSQEYGDKLTIVKIDHDANPKLIAEFKVYGLPHFILFKDGKEVPGSRREGAITKAKLKEYIDGLLNSISVA.

Residues Met1–Arg67 constitute a chloroplast transit peptide. Positions Cys68 to Asn177 constitute a Thioredoxin domain. Catalysis depends on nucleophile residues Cys99 and Cys102. Cys99 and Cys102 are disulfide-bonded.

This sequence belongs to the thioredoxin family. As to expression, predominantly expressed in leaves.

It is found in the plastid. The protein resides in the chloroplast stroma. In terms of biological role, probable thiol-disulfide oxidoreductase that may participate in various redox reactions. The polypeptide is Thioredoxin X, chloroplastic (ATHX) (Arabidopsis thaliana (Mouse-ear cress)).